We begin with the raw amino-acid sequence, 120 residues long: MSITKDQIIEAVASMSVMEVVELIEAMEEKFGVSAAVAVAAGPAAEAVEEKTEFDVVLTAAGANKVAVIKAVRAATGLGLKEAKDLVEAAPANLKEAISKDEAETLKKQLEEAGASVEIK.

The protein belongs to the bacterial ribosomal protein bL12 family. Homodimer. Part of the ribosomal stalk of the 50S ribosomal subunit. Forms a multimeric L10(L12)X complex, where L10 forms an elongated spine to which 2 to 4 L12 dimers bind in a sequential fashion. Binds GTP-bound translation factors.

Forms part of the ribosomal stalk which helps the ribosome interact with GTP-bound translation factors. Is thus essential for accurate translation. This chain is Large ribosomal subunit protein bL12, found in Aeromonas salmonicida (strain A449).